Reading from the N-terminus, the 561-residue chain is MEVRRRAPLPPPPGRVQAGDALPLPIRHTNLIFSALFAASLAYLMRRWREKIRSSTPLHVVGLAEMLAIFGLVASLIYLLSFFGIAFVQSIVSSSDDEEEDFLVGPARGSSAAAAVAPPPPPSSPAQCSLLGSPHDDAARERMPEEDEEIVSSVVAGKVPSYVLETKLGDCRRAAGIRREAVRRITGRQIEGLPLDGFDYASILGQCCELPVGYVQLPVGIAGPLLLDGQRFYVPMATTEGCLVASTNRGCKAIAESGGAVSVVLRDGMTRAPVARLPTARRAAELKAFLEDSVNFNTLSMVFNRSSRFARLQGVQCAMAGRNLYMRFSCCTGDAMGMNMVSKGVQNVLDYLQDDFPDMDVISISGNFCSDKKPAAVNWIEGRGKSVVCEAVIKEDVVKKVLKTNVQSLVELNVIKNLAGSAVAGALGGFNAHASNIVTAIFIATGQDPAQNVESSHCITMLEAVNDGRDLHISVTMPSIEVGTVGGGTQLASQAACLDLLGVKGANRESPGSNARLLATVVAGGVLAGELSLLSALAAGQLVKSHMKYNRSSKDMSKVIS.

A run of 2 helical transmembrane segments spans residues 25–45 (PIRH…AYLM) and 69–89 (IFGL…AFVQ). Residues 90–145 (SIVSSSDDEEEDFLVGPARGSSAAAAVAPPPPPSSPAQCSLLGSPHDDAARERMPE) form a linker region. Positions 113–146 (AAAVAPPPPPSSPAQCSLLGSPHDDAARERMPEE) are disordered. Residues 134 to 143 (PHDDAARERM) show a composition bias toward basic and acidic residues. Positions 146 to 561 (EDEEIVSSVV…SSKDMSKVIS (416 aa)) are catalytic. E240 (charge relay system) is an active-site residue. A glycan (N-linked (GlcNAc...) asparagine) is linked at N304. Catalysis depends on charge relay system residues K372 and D448. The active-site Proton donor is H546. N550 carries N-linked (GlcNAc...) asparagine glycosylation.

The protein belongs to the HMG-CoA reductase family.

Its subcellular location is the endoplasmic reticulum membrane. It carries out the reaction (R)-mevalonate + 2 NADP(+) + CoA = (3S)-3-hydroxy-3-methylglutaryl-CoA + 2 NADPH + 2 H(+). The protein operates within metabolic intermediate biosynthesis; (R)-mevalonate biosynthesis; (R)-mevalonate from acetyl-CoA: step 3/3. Catalyzes the synthesis of mevalonate. The specific precursor of all isoprenoid compounds present in plants. This Oryza sativa subsp. japonica (Rice) protein is 3-hydroxy-3-methylglutaryl-coenzyme A reductase 3 (HMG3).